We begin with the raw amino-acid sequence, 201 residues long: Beta-lactamase inhibitory protein (201 aa).

The first 36 residues, 1–36 (MRTVGIGAGVRRLGRAVVMAAAVGGLVLGSAGASNA), serve as a signal peptide directing secretion. 2 repeat units span residues 37–112 (AGVM…EKLL) and 116–201 (APTL…WDLV). Intrachain disulfides connect Cys-66/Cys-78 and Cys-145/Cys-167.

As to quaternary structure, interacts with E.coli beta-lactamase TEM-1; interaction inhibits hydrolysis of beta-lactam antibiotics. Interacts with K.pneumoniae beta-lactamase SHV-1. Interacts with K.pneumoniae beta-lactamases KPC-2 and KPC-3; interaction inhibits hydrolysis of beta-lactam antibiotics. Interacts with E.coli beta-lactamases CTX-M-14 and CTX-M-15; interaction inhibits hydrolysis of beta-lactam antibiotics.

Its subcellular location is the secreted. Inhibits a wide variety of beta lactamases. The protein is Beta-lactamase inhibitory protein of Streptomyces clavuligerus.